The sequence spans 293 residues: Shikimate dehydrogenase (NADP(+)) (293 aa).

Residues 26-28 (SKS) and threonine 73 each bind shikimate. The Proton acceptor role is filled by lysine 77. Aspartate 89 serves as a coordination point for NADP(+). Shikimate-binding residues include asparagine 98 and aspartate 113. Residues 137 to 141 (GAGGA), 161 to 166 (NRTKQR), and isoleucine 231 contribute to the NADP(+) site. Shikimate is bound at residue tyrosine 233. Glycine 254 lines the NADP(+) pocket.

This sequence belongs to the shikimate dehydrogenase family. Homodimer.

The enzyme catalyses shikimate + NADP(+) = 3-dehydroshikimate + NADPH + H(+). Its pathway is metabolic intermediate biosynthesis; chorismate biosynthesis; chorismate from D-erythrose 4-phosphate and phosphoenolpyruvate: step 4/7. Its function is as follows. Involved in the biosynthesis of the chorismate, which leads to the biosynthesis of aromatic amino acids. Catalyzes the reversible NADPH linked reduction of 3-dehydroshikimate (DHSA) to yield shikimate (SA). This Bartonella henselae (strain ATCC 49882 / DSM 28221 / CCUG 30454 / Houston 1) (Rochalimaea henselae) protein is Shikimate dehydrogenase (NADP(+)).